A 154-amino-acid chain; its full sequence is Myoglobin (154 aa).

Positions 2–148 constitute a Globin domain; that stretch reads VLSEGEWQLV…FRKDIAAKYK (147 aa). Position 4 is a phosphoserine (S4). Nitrite is bound at residue H65. H65 lines the O2 pocket. The residue at position 68 (T68) is a Phosphothreonine. H94 contributes to the heme b binding site.

It belongs to the globin family. In terms of assembly, monomeric.

Its subcellular location is the cytoplasm. It localises to the sarcoplasm. It carries out the reaction Fe(III)-heme b-[protein] + nitric oxide + H2O = Fe(II)-heme b-[protein] + nitrite + 2 H(+). It catalyses the reaction H2O2 + AH2 = A + 2 H2O. In terms of biological role, monomeric heme protein which primary function is to store oxygen and facilitate its diffusion within muscle tissues. Reversibly binds oxygen through a pentacoordinated heme iron and enables its timely and efficient release as needed during periods of heightened demand. Depending on the oxidative conditions of tissues and cells, and in addition to its ability to bind oxygen, it also has a nitrite reductase activity whereby it regulates the production of bioactive nitric oxide. Under stress conditions, like hypoxia and anoxia, it also protects cells against reactive oxygen species thanks to its pseudoperoxidase activity. In Kogia breviceps (Pygmy sperm whale), this protein is Myoglobin (MB).